Consider the following 129-residue polypeptide: uncharacterized protein (129 aa).

This sequence belongs to the asfivirus C129R family.

It localises to the virion. Functionally, plays a role in the inhibition of type I interferon signaling pathway. Mechanistically, specifically interacts with 2',3'-cGAMP and cleaves it via its phosphodiesterase activity. In turn, prevents 2',3'-cGAMP interaction with host ER-resident STING1 leading to inhibition of downstream signaling pathway and type I interferon production. This is an uncharacterized protein from Ornithodoros (relapsing fever ticks).